The following is a 292-amino-acid chain: NAD kinase (292 aa).

D73 functions as the Proton acceptor in the catalytic mechanism. Residues 73 to 74 (DG), 147 to 148 (NE), H158, R175, D177, 188 to 193 (TAYSLS), and Q247 contribute to the NAD(+) site.

This sequence belongs to the NAD kinase family. The cofactor is a divalent metal cation.

Its subcellular location is the cytoplasm. The catalysed reaction is NAD(+) + ATP = ADP + NADP(+) + H(+). Involved in the regulation of the intracellular balance of NAD and NADP, and is a key enzyme in the biosynthesis of NADP. Catalyzes specifically the phosphorylation on 2'-hydroxyl of the adenosine moiety of NAD to yield NADP. This Salmonella dublin (strain CT_02021853) protein is NAD kinase.